A 731-amino-acid polypeptide reads, in one-letter code: MEELIVELRLFLELLDHEYLTSTVREKKAVLTNILLRMQSSKGFEVKDHAQKAETNNLPAPPQMPLPEIPQPWLPPDSGPPPLPTSSLPEGYYEEAVPLSPGKAPEYITSNYDSEAMGSSYESYDEEEEDGKGKKTQHQCHHEEASMDLVKDAKICAFLLRKKRFGQWTKLLCVIKDTKLLCYKSSKDQQPQMELPLQGCSITYIPRDSKKKKHELKITQQGTDPLVLAVQSKEQAEQWLKVIKEAYSGCSGPVDPECSPPPSASVPVNKAELEKKLSSERPSSDGEGVVENGVTTCNGKEQAKRKKPSKSEAKGTVSKVTGKKITKIIGLGKKKPSTDEQTSSAEEDVPTCGYLNVLSNSRWRERWCRVKDSKLILHKDRADLKTHIVSIPLRGCEVIPGLDSKHPLTFRLLRNGQEVAVLEASSSEDMGRWIGILLAETGSSTDPGALHYDYIDVEMSANVIQTAKQTFCFMNRRAVSTSPYLGSLSNGYAHPSGTALHYDDVPCVNGSLKNKKPPASSNGLPVKGRAPSSQQKKVESAGGVKRTASNAEQYKYGKNRVEADAKRLQSKEEELLKRKEALRNRLAQLRKERKDLRAAIEVNAGRKTQVALEDKLKRLEEECKQREAERVSLELELTEVKESLKKALAGGVTLGLAIEPKSGTSSPQSPVFRHRTLENSPISSCDTSDAEGPLPVNSAAVLKKSQPSSSSSPCRGHVLQKAREWELKNGT.

Residue Met1 is modified to N-acetylmethionine. Positions 46–90 (VKDHAQKAETNNLPAPPQMPLPEIPQPWLPPDSGPPPLPTSSLPE) are disordered. A compositionally biased stretch (pro residues) spans 59–84 (PAPPQMPLPEIPQPWLPPDSGPPPLP). Residues 70–73 (PQPW) carry the SH3-binding motif. The short motif at 93 to 96 (YEEA) is the SH2-binding 1 element. Residues 118 to 138 (GSSYESYDEEEEDGKGKKTQH) are disordered. Residues 152–248 (DAKICAFLLR…WLKVIKEAYS (97 aa)) enclose the PH 1 domain. The segment at 252–318 (GPVDPECSPP…SKSEAKGTVS (67 aa)) is disordered. The segment covering 271–284 (AELEKKLSSERPSS) has biased composition (basic and acidic residues). Phosphoserine is present on residues Ser283 and Ser284. Positions 348–442 (DVPTCGYLNV…WIGILLAETG (95 aa)) constitute a PH 2 domain. The short motif at 452-457 (YDYIDV) is the SH2-binding 2 element. The interval 511–550 (SLKNKKPPASSNGLPVKGRAPSSQQKKVESAGGVKRTASN) is disordered. Position 549 is a phosphoserine (Ser549). The stretch at 558-649 (KNRVEADAKR…VKESLKKALA (92 aa)) forms a coiled coil. An interaction with F-actin region spans residues 595 to 638 (DLRAAIEVNAGRKTQVALEDKLKRLEEECKQREAERVSLELELT). A disordered region spans residues 657–731 (AIEPKSGTSS…AREWELKNGT (75 aa)). Residues Ser665, Ser666, and Ser669 each carry the phosphoserine modification. Position 676 is a phosphothreonine (Thr676). Residues 678–687 (ENSPISSCDT) are compositionally biased toward polar residues. Phosphoserine is present on residues Ser680 and Ser688. Positions 721 to 731 (KAREWELKNGT) are enriched in basic and acidic residues.

As to quaternary structure, monomer and homomultimer. Interacts via its C-terminus with F-actin; probably involving AFAP1 multimers. Interacts with activated SRC SH3-SH2 domains. Interacts via its PH 1 domain with PRKCA, PRKCB and PRKCI. In terms of processing, phosphorylated on tyrosine residues. Widely expressed with highest levels in brain.

The protein resides in the cytoplasm. The protein localises to the cytoskeleton. Its subcellular location is the stress fiber. Its function is as follows. Can cross-link actin filaments into both network and bundle structures. May modulate changes in actin filament integrity and induce lamellipodia formation. May function as an adapter molecule that links other proteins, such as SRC and PKC to the actin cytoskeleton. The protein is Actin filament-associated protein 1 (Afap1) of Rattus norvegicus (Rat).